The sequence spans 367 residues: sn-glycerol-3-phosphate import ATP-binding protein UgpC (367 aa).

In terms of domain architecture, ABC transporter spans 4 to 235 (LSLRNVQKTY…PASTFVAGFI (232 aa)). An ATP-binding site is contributed by 37-44 (GPSGCGKS).

It belongs to the ABC transporter superfamily. sn-glycerol-3-phosphate importer (TC 3.A.1.1.3) family. The complex is composed of two ATP-binding proteins (UgpC), two transmembrane proteins (UgpA and UgpE) and a solute-binding protein (UgpB).

The protein resides in the cell inner membrane. It catalyses the reaction sn-glycerol 3-phosphate(out) + ATP + H2O = sn-glycerol 3-phosphate(in) + ADP + phosphate + H(+). In terms of biological role, part of the ABC transporter complex UgpBAEC involved in sn-glycerol-3-phosphate (G3P) import. Responsible for energy coupling to the transport system. This chain is sn-glycerol-3-phosphate import ATP-binding protein UgpC, found in Cupriavidus metallidurans (strain ATCC 43123 / DSM 2839 / NBRC 102507 / CH34) (Ralstonia metallidurans).